A 329-amino-acid chain; its full sequence is GTP 3',8-cyclase (329 aa).

The region spanning 1–229 is the Radical SAM core domain; sequence MNQVDYLRIS…EGYVRGNGPA (229 aa). A GTP-binding site is contributed by R8. [4Fe-4S] cluster contacts are provided by C15 and C19. Y21 contributes to the S-adenosyl-L-methionine binding site. Position 22 (C22) interacts with [4Fe-4S] cluster. R60 serves as a coordination point for GTP. An S-adenosyl-L-methionine-binding site is contributed by G64. T91 lines the GTP pocket. S115 contacts S-adenosyl-L-methionine. K155 is a binding site for GTP. M189 provides a ligand contact to S-adenosyl-L-methionine. 2 residues coordinate [4Fe-4S] cluster: C252 and C255. 257-259 lines the GTP pocket; that stretch reads RVR. Residue C269 coordinates [4Fe-4S] cluster.

The protein belongs to the radical SAM superfamily. MoaA family. In terms of assembly, monomer and homodimer. Requires [4Fe-4S] cluster as cofactor.

It catalyses the reaction GTP + AH2 + S-adenosyl-L-methionine = (8S)-3',8-cyclo-7,8-dihydroguanosine 5'-triphosphate + 5'-deoxyadenosine + L-methionine + A + H(+). Its pathway is cofactor biosynthesis; molybdopterin biosynthesis. Catalyzes the cyclization of GTP to (8S)-3',8-cyclo-7,8-dihydroguanosine 5'-triphosphate. This Cyanothece sp. (strain PCC 7425 / ATCC 29141) protein is GTP 3',8-cyclase.